Here is a 424-residue protein sequence, read N- to C-terminus: Hemagglutinin-esterase (424 aa).

A signal peptide spans 1–16 (MFLLPRFVLVSCIIGS). The esterase domain 1 stretch occupies residues 7–127 (FVLVSCIIGS…SNDIWMQNKG (121 aa)). The Virion surface portion of the chain corresponds to 17–392 (LGFDNPPTNV…PICVYDPLPI (376 aa)). The Nucleophile role is filled by Ser40. The cysteines at positions 44 and 65 are disulfide-linked. N-linked (GlcNAc...) asparagine; by host glycosylation is found at Asn54, Asn89, Asn153, Asn236, and Asn301. Disulfide bonds link Cys113–Cys162, Cys197–Cys276, and Cys205–Cys249. The tract at residues 128–266 (LFYTQLYKNM…GNYLAISNEL (139 aa)) is receptor binding. Positions 267–379 (LLTVPTKAIC…RCPTAADINT (113 aa)) are esterase domain 2. Cysteines 307 and 312 form a disulfide. Asn316 carries N-linked (GlcNAc...) asparagine; by host glycosylation. Residues Asp326 and His329 each act as charge relay system in the active site. Cys347 and Cys371 are joined by a disulfide. N-linked (GlcNAc...) asparagine; by host glycosylation occurs at Asn358. The chain crosses the membrane as a helical span at residues 393–413 (ILLGILLGVAVIIIVVLLLYF). At 414-424 (MVDNGTRLHDA) the chain is on the intravirion side. Asn417 carries an N-linked (GlcNAc...) asparagine; by host glycan.

It belongs to the influenza type C/coronaviruses hemagglutinin-esterase family. Homodimer; disulfide-linked. Forms a complex with the M protein in the pre-Golgi. Associates then with S-M complex to form a ternary complex S-M-HE. N-glycosylated in the host RER.

The protein localises to the virion membrane. Its subcellular location is the host cell membrane. It catalyses the reaction N-acetyl-9-O-acetylneuraminate + H2O = N-acetylneuraminate + acetate + H(+). The enzyme catalyses N-acetyl-4-O-acetylneuraminate + H2O = N-acetylneuraminate + acetate + H(+). Structural protein that makes short spikes at the surface of the virus. Contains receptor binding and receptor-destroying activities. Mediates de-O-acetylation of N-acetyl-4-O-acetylneuraminic acid, which is probably the receptor determinant recognized by the virus on the surface of erythrocytes and susceptible cells. This receptor-destroying activity is important for virus release as it probably helps preventing self-aggregation and ensures the efficient spread of the progeny virus from cell to cell. May serve as a secondary viral attachment protein for initiating infection, the spike protein being the major one. May become a target for both the humoral and the cellular branches of the immune system. In Bovine coronavirus (strain LSU-94LSS-051) (BCoV-LSU), this protein is Hemagglutinin-esterase.